Here is a 70-residue protein sequence, read N- to C-terminus: Beta sliding clamp (70 aa).

It belongs to the beta sliding clamp family. As to quaternary structure, forms a ring-shaped head-to-tail homodimer around DNA which binds and tethers DNA polymerases and other proteins to the DNA. The DNA replisome complex has a single clamp-loading complex (3 tau and 1 each of delta, delta', psi and chi subunits) which binds 3 Pol III cores (1 core on the leading strand and 2 on the lagging strand) each with a beta sliding clamp dimer. Additional proteins in the replisome are other copies of gamma, psi and chi, Ssb, DNA helicase and RNA primase.

The protein localises to the cytoplasm. Its function is as follows. Confers DNA tethering and processivity to DNA polymerases and other proteins. Acts as a clamp, forming a ring around DNA (a reaction catalyzed by the clamp-loading complex) which diffuses in an ATP-independent manner freely and bidirectionally along dsDNA. Initially characterized for its ability to contact the catalytic subunit of DNA polymerase III (Pol III), a complex, multichain enzyme responsible for most of the replicative synthesis in bacteria; Pol III exhibits 3'-5' exonuclease proofreading activity. The beta chain is required for initiation of replication as well as for processivity of DNA replication. This chain is Beta sliding clamp (dnaN), found in Rhodobacter capsulatus (Rhodopseudomonas capsulata).